The primary structure comprises 585 residues: Arginine--tRNA ligase (585 aa).

Positions 130–140 (ANPTGPMHVGH) match the 'HIGH' region motif.

It belongs to the class-I aminoacyl-tRNA synthetase family. In terms of assembly, monomer.

It localises to the cytoplasm. It carries out the reaction tRNA(Arg) + L-arginine + ATP = L-arginyl-tRNA(Arg) + AMP + diphosphate. In Methylorubrum extorquens (strain PA1) (Methylobacterium extorquens), this protein is Arginine--tRNA ligase.